Reading from the N-terminus, the 308-residue chain is Taste receptor type 2 member 107 (308 aa).

Topologically, residues 1–7 (MLSAAEG) are extracellular. Residues 8–28 (ILLCVVTSEAVLGVLGDTFIA) traverse the membrane as a helical segment. The Cytoplasmic segment spans residues 29 to 43 (LANCMEYAKNKKLSK). A helical transmembrane segment spans residues 44-64 (IGFILIGLAISRIGVVWIIIL). Residues 65–94 (QGYMQVFFPHILTFGNITEYITYIWVFLNH) lie on the Extracellular side of the membrane. Asn-80 carries an N-linked (GlcNAc...) asparagine glycan. A helical membrane pass occupies residues 95-115 (LSVWFATNLNILYFLKIANFS). The Cytoplasmic portion of the chain corresponds to 116 to 127 (NSVFLWLKSRVR). The helical transmembrane segment at 128–148 (VVFIFLSGCLLTSWLLCFPQF) threads the bilayer. The Extracellular segment spans residues 149–180 (SKMLNNSKMYWGNTSWLQQQKNVFLINQSLTN). N-linked (GlcNAc...) asparagine glycans are attached at residues Asn-153, Asn-161, and Asn-175. The helical transmembrane segment at 181–201 (LGIFFFIIVSLITCFLLIVFL) threads the bilayer. Residues 202-232 (WRHIRQMHSDGSGLRDLNTEAHVKAMRVLIS) are Cytoplasmic-facing. Residues 233–253 (FAVLFILHFVGLSIQVLCFFL) form a helical membrane-spanning segment. Topologically, residues 254–258 (PQNNL) are extracellular. A helical transmembrane segment spans residues 259–279 (LFITGLIATCLYPCGHSIILI). Residues 280 to 308 (LGNKQLKQASLKALQHLTCCETKRNLSVT) lie on the Cytoplasmic side of the membrane.

The protein belongs to the G-protein coupled receptor T2R family.

The protein resides in the membrane. Its function is as follows. Putative taste receptor which may play a role in the perception of bitterness. This Rattus norvegicus (Rat) protein is Taste receptor type 2 member 107.